The chain runs to 236 residues: Uridylate kinase (236 aa).

10-13 (KLSG) provides a ligand contact to ATP. Gly52 serves as a coordination point for UMP. Residues Gly53 and Arg57 each contribute to the ATP site. Residues Asp72 and 133–140 (TGNPFFTT) each bind UMP. ATP is bound by residues Thr160, Tyr166, and Asp169.

It belongs to the UMP kinase family. As to quaternary structure, homohexamer.

Its subcellular location is the cytoplasm. The enzyme catalyses UMP + ATP = UDP + ADP. The protein operates within pyrimidine metabolism; CTP biosynthesis via de novo pathway; UDP from UMP (UMPK route): step 1/1. With respect to regulation, inhibited by UTP. Its function is as follows. Catalyzes the reversible phosphorylation of UMP to UDP. This chain is Uridylate kinase, found in Ralstonia nicotianae (strain ATCC BAA-1114 / GMI1000) (Ralstonia solanacearum).